We begin with the raw amino-acid sequence, 738 residues long: Catalase-peroxidase (738 aa).

The span at 1–13 (MDGQDIGAGGGCP) shows a compositional bias: gly residues. The interval 1 to 26 (MDGQDIGAGGGCPFSGANTNKGRRSN) is disordered. Positions 98 to 226 (WHSAGTYRTA…LAAVQMGLIY (129 aa)) form a cross-link, tryptophyl-tyrosyl-methioninium (Trp-Tyr) (with M-252). H99 functions as the Proton acceptor in the catalytic mechanism. Positions 226–252 (YVNPEGPDGNPDPIASGRDIRETFARM) form a cross-link, tryptophyl-tyrosyl-methioninium (Tyr-Met) (with W-98). H267 lines the heme b pocket.

It belongs to the peroxidase family. Peroxidase/catalase subfamily. Homodimer or homotetramer. It depends on heme b as a cofactor. In terms of processing, formation of the three residue Trp-Tyr-Met cross-link is important for the catalase, but not the peroxidase activity of the enzyme.

The catalysed reaction is H2O2 + AH2 = A + 2 H2O. It catalyses the reaction 2 H2O2 = O2 + 2 H2O. In terms of biological role, bifunctional enzyme with both catalase and broad-spectrum peroxidase activity. The sequence is that of Catalase-peroxidase from Ruegeria sp. (strain TM1040) (Silicibacter sp.).